A 108-amino-acid polypeptide reads, in one-letter code: Insulin-1 (108 aa).

Positions Met-1–Ala-24 are cleaved as a signal peptide. 3 disulfides stabilise this stretch: Cys-31–Cys-94, Cys-43–Cys-107, and Cys-93–Cys-98. A propeptide spans Glu-57 to Gln-85 (c peptide).

This sequence belongs to the insulin family. In terms of assembly, heterodimer of a B chain and an A chain linked by two disulfide bonds.

Its subcellular location is the secreted. Its function is as follows. Insulin decreases blood glucose concentration. It increases cell permeability to monosaccharides, amino acids and fatty acids. It accelerates glycolysis, the pentose phosphate cycle, and glycogen synthesis in liver. The sequence is that of Insulin-1 (Ins1) from Mus musculus (Mouse).